Reading from the N-terminus, the 537-residue chain is MPGSPRRAPGLLLQALVAMVSLALVAPFGLQPALWPMPRSVQVFPRLLYISPENFQIDNSPNSTAGPSCSLLLEAFRRYYNYIFGFYKRHHGPAKFQDKPQLEKLLVFINLEPQCDAFPSMSSDESYSLLVQEPVALLKANEVWGALRGLETFSQLVYQDAYGTFTINESTIADSPRFPHRGILIDTSRHYLPVKTIFKTLDAMAFNKFNVLHWHIVDDQSFPYQSITFPELSNKGSYSLSHVYTPNDIHMVLEYARLRGIRVIPEFDSPGHTQSWGKGQKNLLTPCFIQKIRTQKVGPVDPSLNTTYVFFDTFFKEISRVFPDQFIHLGGDEVEFECWASNPNIQNFMKKKGFGNNFRRLESFYIKKILDIITSLKKSSIVWQDVFDDQVELQPGTVVEVWKSENYLNELAQVTASGFPAILSAPWYLDLISYGQDWRNYYKAEPLNFEGSEKQKQLVIGGEACLWGEYVDATNLIPRLWPRASAVGERLWSPRIITNLENAYRRLAVHRCRMVSRGIAAQPLFTGYCNYENKMEK.

The first 23 residues, 1 to 23 (MPGSPRRAPGLLLQALVAMVSLA), serve as a signal peptide directing secretion. Asparagine 62 carries an N-linked (GlcNAc...) asparagine glycan. Cysteine 69 and cysteine 115 are joined by a disulfide. N-linked (GlcNAc...) asparagine glycosylation is found at asparagine 168 and asparagine 305. 2 cysteine pairs are disulfide-bonded: cysteine 287/cysteine 338 and cysteine 512/cysteine 529. Glutamate 333 serves as the catalytic Proton donor.

It belongs to the glycosyl hydrolase 20 family. In terms of assembly, there are 3 forms of beta-hexosaminidase: hexosaminidase A is a heterodimer composed of one subunit alpha and one subunit beta (chain A and B); hexosaminidase B is a homodimer of two beta subunits (two chains A and B); hexosaminidase S is a homodimer of two alpha subunits. The composition of the dimer (isozyme A versus isozyme S) has a significant effect on the substrate specificity of the alpha subunit active site.

Its subcellular location is the lysosome. The protein resides in the cytoplasmic vesicle. It is found in the secretory vesicle. It localises to the cortical granule. The catalysed reaction is Hydrolysis of terminal non-reducing N-acetyl-D-hexosamine residues in N-acetyl-beta-D-hexosaminides.. It carries out the reaction N-acetyl-beta-D-galactosaminyl-(1-&gt;4)-beta-D-3-sulfogalactosyl-(1-&gt;4)-beta-D-glucosyl-(1&lt;-&gt;1')-ceramide + H2O = a beta-D-3-sulfogalactosyl-(1-&gt;4)-beta-D-glucosyl-(1&lt;-&gt;1')-ceramide + N-acetyl-beta-D-galactosamine. The enzyme catalyses a ganglioside GM2 (d18:1(4E)) + H2O = a ganglioside GM3 (d18:1(4E)) + N-acetyl-beta-D-galactosamine. It catalyses the reaction a ganglioside GM2 + H2O = a ganglioside GM3 + N-acetyl-beta-D-galactosamine. The catalysed reaction is beta-D-GalNAc-(1-&gt;4)-alpha-L-IdoA-(1-&gt;3)-beta-D-GalNAc-4-sulfate-(1-&gt;4)-alpha-L-IdoA-(1-&gt;3)-D-GalNAc-4-sulfate + H2O = alpha-L-IdoA-(1-&gt;3)-beta-D-GalNAc-4-sulfate-(1-&gt;4)-alpha-L-IdoA-(1-&gt;3)-D-GalNAc-4-sulfate + N-acetyl-D-galactosamine. It carries out the reaction N-acetyl-beta-D-6-sulfogalactosaminyl-(1-&gt;4)-alpha-L-iduronyl-(1-&gt;3)-N-acetyl-D-6-sulfogalactosamine + H2O = alpha-L-iduronyl-(1-&gt;3)-N-acetyl-D-6-sulfogalactosamine + N-acetyl-D-6-sulfogalactosamine. Addition of GM2A stimulates the hydrolysis of sulfated glycosphingolipid SM2 and the ganglioside GM2. Its function is as follows. Hydrolyzes the non-reducing end N-acetyl-D-hexosamine and/or sulfated N-acetyl-D-hexosamine of glycoconjugates, such as the oligosaccharide moieties from proteins and neutral glycolipids, or from certain mucopolysaccharides. The isozyme B does not hydrolyze each of these substrates, however hydrolyzes efficiently neutral oligosaccharide. Only the isozyme A is responsible for the degradation of GM2 gangliosides in the presence of GM2A. During fertilization is responsible, at least in part, for the zona block to polyspermy. Present in the cortical granules of non-activated oocytes, is exocytosed during the cortical reaction in response to oocyte activation and inactivates the sperm galactosyltransferase-binding site, accounting for the block in sperm binding to the zona pellucida. This is Beta-hexosaminidase subunit beta from Rattus norvegicus (Rat).